Here is a 340-residue protein sequence, read N- to C-terminus: Ketol-acid reductoisomerase (NADP(+)) (340 aa).

Residues Met-1–Thr-182 form the KARI N-terminal Rossmann domain. NADP(+) is bound by residues Tyr-24–Gln-27, Arg-48, Ser-51, Ser-53, and Asp-83–Gln-86. The active site involves His-108. Residue Gly-134 participates in NADP(+) binding. Residues Asn-183 to Ile-329 form the KARI C-terminal knotted domain. The Mg(2+) site is built by Asp-191, Glu-195, Glu-227, and Glu-231. Residue Ser-252 participates in substrate binding.

Belongs to the ketol-acid reductoisomerase family. Mg(2+) is required as a cofactor.

It carries out the reaction (2R)-2,3-dihydroxy-3-methylbutanoate + NADP(+) = (2S)-2-acetolactate + NADPH + H(+). The enzyme catalyses (2R,3R)-2,3-dihydroxy-3-methylpentanoate + NADP(+) = (S)-2-ethyl-2-hydroxy-3-oxobutanoate + NADPH + H(+). Its pathway is amino-acid biosynthesis; L-isoleucine biosynthesis; L-isoleucine from 2-oxobutanoate: step 2/4. It functions in the pathway amino-acid biosynthesis; L-valine biosynthesis; L-valine from pyruvate: step 2/4. In terms of biological role, involved in the biosynthesis of branched-chain amino acids (BCAA). Catalyzes an alkyl-migration followed by a ketol-acid reduction of (S)-2-acetolactate (S2AL) to yield (R)-2,3-dihydroxy-isovalerate. In the isomerase reaction, S2AL is rearranged via a Mg-dependent methyl migration to produce 3-hydroxy-3-methyl-2-ketobutyrate (HMKB). In the reductase reaction, this 2-ketoacid undergoes a metal-dependent reduction by NADPH to yield (R)-2,3-dihydroxy-isovalerate. The chain is Ketol-acid reductoisomerase (NADP(+)) from Cereibacter sphaeroides (strain ATCC 17029 / ATH 2.4.9) (Rhodobacter sphaeroides).